The following is a 547-amino-acid chain: MSAKEVRFGEDARNKMLKGVNILADAVKVTLGPKGRNVILDKSFGTPTVTKDGVSVAKEIELADKFENMGAQLVKEVASQTNDAAGDGTTTATVLAQAIVVEGLKAVAAGMNPMDLKRGIDKAVAEAVKTLHAISKPCSDSKAIAQVGTISANSDETVGAKIAEAMEKVGKEGVITVEEGQGLEDSLEVVEGMQFDRGYLSPYFINNQQSQQVELENPYILLHDKKIANIRDMLPLLEGVAKSGQPLLIVAEDVEGEALATLVINSMRGIVKVAAVKAPGFGDRRKAMLEDIAILTGGTVISEEVGLTLESVTLDQLGTAKRVTVGKDNTTIIDGSGEKSAIEARVALIRHQIEESSSDYDKEKLQERVAKLAGGVAVIKVGAATEVEMKEKKDRVEDALHATRAAVEEGIVPGGGVALIRAINSIVDLKGDNYDQQVGIDIARRAMEYPLRTIVSNAGSEAAVVLERVKSGKGNDGYDAATGQYVDMVAAGIIDPTKVTRSALQNAASVAGLMITTEAMVSEIPQKEEGHHHDMGGMGGMGGMGMM.

Residues 30–33 (TLGP), lysine 51, 87–91 (DGTTT), glycine 415, 479–481 (DAA), and aspartate 495 contribute to the ATP site.

The protein belongs to the chaperonin (HSP60) family. In terms of assembly, forms a cylinder of 14 subunits composed of two heptameric rings stacked back-to-back. Interacts with the co-chaperonin GroES.

Its subcellular location is the cytoplasm. The enzyme catalyses ATP + H2O + a folded polypeptide = ADP + phosphate + an unfolded polypeptide.. In terms of biological role, together with its co-chaperonin GroES, plays an essential role in assisting protein folding. The GroEL-GroES system forms a nano-cage that allows encapsulation of the non-native substrate proteins and provides a physical environment optimized to promote and accelerate protein folding. The polypeptide is Chaperonin GroEL (Dichelobacter nodosus (strain VCS1703A)).